Consider the following 275-residue polypeptide: MHLQTRAAVVTGAASGIGLALSARFARAGAGVVMADVDGDALHRRAAELTARGAQVTAVTADLTDPEVVERLADTAFDQLGDIDVVCNNAGVLGPVGQPLWEVPLERMRQVFEVNHWAHVLVARAFVPRLLERGRPAHLIHTASMSAFVVGAGSAAYAASKHADLAVARSLRADLRGTGVRVSVLCPGRVDTPMVQGLTAPRGAGGDTSVSAEDVAGLVWEALGSDRFYLFSNSDARIRLRDQFDDVWRHVSLPPPSPEEELWPAPKATTVTMNH.

12 to 36 (GAASGIGLALSARFARAGAGVVMAD) contacts NAD(+). Position 144 (serine 144) interacts with substrate. Tyrosine 157 acts as the Proton acceptor in catalysis. NAD(+) is bound at residue lysine 161.

This sequence belongs to the short-chain dehydrogenases/reductases (SDR) family.

The enzyme catalyses 1-deoxy-11beta-hydroxypentalenate + NAD(+) = 1-deoxy-11-oxopentalenate + NADH + H(+). The protein operates within antibiotic biosynthesis; pentalenolactone biosynthesis. Functionally, catalyzes the oxidation of 1-deoxy-11-beta-hydroxypentalenic acid to 1-deoxy-11-oxopentalenic acid in the biosynthesis of pentalenolactone antibiotic. This Streptomyces exfoliatus (Streptomyces hydrogenans) protein is 1-deoxy-11-beta-hydroxypentalenate dehydrogenase (penF).